Here is a 208-residue protein sequence, read N- to C-terminus: dTTP/UTP pyrophosphatase (208 aa).

Aspartate 78 functions as the Proton acceptor in the catalytic mechanism.

Belongs to the Maf family. YhdE subfamily. A divalent metal cation is required as a cofactor.

The protein localises to the cytoplasm. It carries out the reaction dTTP + H2O = dTMP + diphosphate + H(+). The catalysed reaction is UTP + H2O = UMP + diphosphate + H(+). Functionally, nucleoside triphosphate pyrophosphatase that hydrolyzes dTTP and UTP. May have a dual role in cell division arrest and in preventing the incorporation of modified nucleotides into cellular nucleic acids. The protein is dTTP/UTP pyrophosphatase of Maricaulis maris (strain MCS10) (Caulobacter maris).